A 204-amino-acid chain; its full sequence is N-(5'-phosphoribosyl)anthranilate isomerase (204 aa).

It belongs to the TrpF family.

The catalysed reaction is N-(5-phospho-beta-D-ribosyl)anthranilate = 1-(2-carboxyphenylamino)-1-deoxy-D-ribulose 5-phosphate. The protein operates within amino-acid biosynthesis; L-tryptophan biosynthesis; L-tryptophan from chorismate: step 3/5. The sequence is that of N-(5'-phosphoribosyl)anthranilate isomerase from Bacillus cereus (strain G9842).